The sequence spans 206 residues: Uridine kinase (206 aa).

An ATP-binding site is contributed by 11-18 (GGTGSGKS).

It belongs to the uridine kinase family.

The protein localises to the cytoplasm. It carries out the reaction uridine + ATP = UMP + ADP + H(+). The enzyme catalyses cytidine + ATP = CMP + ADP + H(+). It participates in pyrimidine metabolism; CTP biosynthesis via salvage pathway; CTP from cytidine: step 1/3. The protein operates within pyrimidine metabolism; UMP biosynthesis via salvage pathway; UMP from uridine: step 1/1. This chain is Uridine kinase, found in Clostridium botulinum (strain 657 / Type Ba4).